A 100-amino-acid chain; its full sequence is Urease subunit gamma 1 (100 aa).

It belongs to the urease gamma subunit family. Heterotrimer of UreA (gamma), UreB (beta) and UreC (alpha) subunits. Three heterotrimers associate to form the active enzyme.

It localises to the cytoplasm. The catalysed reaction is urea + 2 H2O + H(+) = hydrogencarbonate + 2 NH4(+). Its pathway is nitrogen metabolism; urea degradation; CO(2) and NH(3) from urea (urease route): step 1/1. Disruption of the ure1 gene cluster suggests that it protects brucellae during their passage through the stomach. The major route of infection in human brucellosis is oral. The protein is Urease subunit gamma 1 of Brucella abortus (strain 2308).